Here is a 416-residue protein sequence, read N- to C-terminus: 2-aminoadipate transaminase (416 aa).

Pyridoxal 5'-phosphate-binding positions include 102 to 103 (GA) and Gln233. Lys259 is modified (N6-(pyridoxal phosphate)lysine). Thr288 provides a ligand contact to pyridoxal 5'-phosphate.

It belongs to the class-III pyridoxal-phosphate-dependent aminotransferase family. Pyridoxal 5'-phosphate serves as cofactor.

The enzyme catalyses L-2-aminoadipate + 2-oxoglutarate = 2-oxoadipate + L-glutamate. It catalyses the reaction 5-aminopentanoate + 2-oxoglutarate = 5-oxopentanoate + L-glutamate. It functions in the pathway amino-acid degradation. Its function is as follows. Catalyzes the conversion of 2-aminoadipate (2AA) to 2-oxoadipate (2OA). Is most active on L-2-aminoadipate (L-2AA) and shows only weak activity on the enantiomer, D-2-aminoadipate (D-2AA). Shows moderate activity on 5-aminovalerate (5AVA) and weak activity toward 4-aminobutyrate (GABA). Is involved in a D-lysine catabolic pathway. The polypeptide is 2-aminoadipate transaminase (Pseudomonas putida (strain ATCC 47054 / DSM 6125 / CFBP 8728 / NCIMB 11950 / KT2440)).